The following is a 396-amino-acid chain: Interactor of constitutive active ROPs 5 (396 aa).

Disordered regions lie at residues 1–49 (MQTP…TQIP) and 99–122 (ALKR…NASE). 2 coiled-coil regions span residues 67–124 (KKRT…SEDS) and 158–366 (LSSA…TAAS). Basic and acidic residues predominate over residues 99-115 (ALKREAQEEAEDAKHQL).

It belongs to the ICR family. In terms of assembly, component of the active ARAC10-IRC5-KIN13A complex. Homooligomer. Interacts (via C-terminus) with ARAC4, ARAC10, ARAC11 and (via N-terminus) with KIN13A (via C-terminus), but no interactions with SEC3A. Expressed in xylem cells in the roots and in stamens, petals and pollen.

It localises to the cell membrane. It is found in the cytoplasm. Its subcellular location is the cytoskeleton. Functionally, ROP effector binding specifically activated ROPs and linking them to the microtubule cytoskeleton. Involved in ROP-regulated polar growth. Involved in local disassembly of cortical microtubules when associated with ARAC10 and KIN13A and conversely also mediates the elimination of ARAC10 from the plasma membrane by the cortical microtubules. Accumulates at the plus end of shrinking microtubules. Targets KIN13A to microtubules. The protein is Interactor of constitutive active ROPs 5 (ICR5) of Arabidopsis thaliana (Mouse-ear cress).